We begin with the raw amino-acid sequence, 461 residues long: Cysteine--tRNA ligase (461 aa).

A Zn(2+)-binding site is contributed by C28. Positions 30–40 (VTIYDLCHIGH) match the 'HIGH' region motif. Zn(2+)-binding residues include C211, H236, and E240. Residues 268-272 (KMSKS) carry the 'KMSKS' region motif. K271 serves as a coordination point for ATP.

It belongs to the class-I aminoacyl-tRNA synthetase family. Monomer. Requires Zn(2+) as cofactor.

The protein resides in the cytoplasm. The catalysed reaction is tRNA(Cys) + L-cysteine + ATP = L-cysteinyl-tRNA(Cys) + AMP + diphosphate. In Aliivibrio fischeri (strain ATCC 700601 / ES114) (Vibrio fischeri), this protein is Cysteine--tRNA ligase.